The chain runs to 166 residues: Cyclin-dependent kinase 4 inhibitor D (166 aa).

At M1 the chain carries N-acetylmethionine. ANK repeat units follow at residues 41 to 69, 73 to 102, 106 to 135, and 138 to 165; these read FGKTALQVMMFGSPAVALELLKQGASPNV, SGTSPVHDAARTGFLDTLKVLVEHGADVNA, TGSLPIHLAIREGHSSVVSFLAPESDLHHR, and SGLTPLELARQRGAQNLMDILQGHMMIP.

This sequence belongs to the CDKN2 cyclin-dependent kinase inhibitor family. Interacts with CDK6.

It localises to the nucleus. The protein localises to the cytoplasm. Its function is as follows. Interacts strongly with CDK4 and CDK6 and inhibits them. This chain is Cyclin-dependent kinase 4 inhibitor D (Cdkn2d), found in Mus musculus (Mouse).